Reading from the N-terminus, the 25-residue chain is Chlorocatechol 1,2-dioxygenase 1 (25 aa).

The protein belongs to the intradiol ring-cleavage dioxygenase family. Fe(3+) is required as a cofactor.

The enzyme catalyses 3,5-dichlorocatechol + O2 = (2E,4E)-2,4-dichloromuconate + 2 H(+). Its pathway is xenobiotic degradation; 2-(2,4-dichlorophenoxy)propanoate degradation. This is Chlorocatechol 1,2-dioxygenase 1 (tfdC) from Delftia acidovorans (Pseudomonas acidovorans).